The sequence spans 688 residues: GTPase IMAP family member 8 (688 aa).

The interval 22-44 (TSIGQGERPRASRGQESNFKQSQ) is disordered. Positions 35-44 (GQESNFKQSQ) are enriched in polar residues. AIG1-type G domains lie at 46-246 (TSTL…TENS), 281-471 (TPEL…VIRE), and 472-681 (KELL…SAVG). The tract at residues 55-62 (GKQGAGKS) is G1. GTP-binding positions include 55 to 63 (GKQGAGKSA) and S76. A G2 region spans residues 82 to 86 (MVTKR). The interval 103 to 106 (DTPD) is G3. The segment at 171 to 174 (TRED) is G4. GTP contacts are provided by residues 172–174 (RED) and N208. The interval 207-209 (NNK) is G5.

This sequence belongs to the TRAFAC class TrmE-Era-EngA-EngB-Septin-like GTPase superfamily. AIG1/Toc34/Toc159-like paraseptin GTPase family. IAN subfamily. In terms of tissue distribution, spleen, thymus and T-cells. Greatly reduced in T-cells from lymphopenic rats.

Its subcellular location is the endoplasmic reticulum. The protein localises to the golgi apparatus. It localises to the mitochondrion. The protein resides in the cytoplasm. It is found in the cytosol. Its function is as follows. Exerts an anti-apoptotic effect in the immune system and is involved in responses to infections. The protein is GTPase IMAP family member 8 (Gimap8) of Rattus norvegicus (Rat).